The chain runs to 222 residues: 7-cyano-7-deazaguanine synthase (222 aa).

Position 9–19 (9–19) interacts with ATP; sequence LSGGLDSATAA. Cysteine 190, cysteine 198, cysteine 201, and cysteine 204 together coordinate Zn(2+).

Belongs to the QueC family. Requires Zn(2+) as cofactor.

The enzyme catalyses 7-carboxy-7-deazaguanine + NH4(+) + ATP = 7-cyano-7-deazaguanine + ADP + phosphate + H2O + H(+). The protein operates within purine metabolism; 7-cyano-7-deazaguanine biosynthesis. Its function is as follows. Catalyzes the ATP-dependent conversion of 7-carboxy-7-deazaguanine (CDG) to 7-cyano-7-deazaguanine (preQ(0)). This is 7-cyano-7-deazaguanine synthase from Synechococcus sp. (strain RCC307).